We begin with the raw amino-acid sequence, 133 residues long: Large ribosomal subunit protein bL17 (133 aa).

It belongs to the bacterial ribosomal protein bL17 family. As to quaternary structure, part of the 50S ribosomal subunit. Contacts protein L32.

The polypeptide is Large ribosomal subunit protein bL17 (Alteromonas mediterranea (strain DSM 17117 / CIP 110805 / LMG 28347 / Deep ecotype)).